Here is a 316-residue protein sequence, read N- to C-terminus: Na(+)/H(+) exchange regulatory cofactor NHE-RF2 (316 aa).

In terms of domain architecture, PDZ 1 spans 11–91 (LCRLVRGEQG…ETRLLVVDKE (81 aa)). Residues 109–148 (QRGLPPAHDPWEPKPDWARAGSLSSDAGQKDVNGPPRELR) are disordered. Phosphoserine is present on residues Ser-130, Ser-183, and Ser-254. The 81-residue stretch at 151 to 231 (LCHLRKGPQG…EARLLLVDPE (81 aa)) folds into the PDZ 2 domain. The disordered stretch occupies residues 244–303 (TEEHVEGPLPSPITNGTSPAQDASAWKRDPFQESGLHLSPTAAEAKEKARATRVNKRAPQ). Over residues 255 to 264 (PITNGTSPAQ) the composition is skewed to polar residues. Phosphoserine is present on Ser-282.

In terms of assembly, homodimer, and heterodimer with NHERF1. Binds ADRB2, SLC9A3, P2RY1, P2YR2, SRY, RDX, PDZK1 and LPAR2. Found in a complex with EZR, PODXL and NHERF2. Interacts (via the PDZ domains) with PODXL (via the C-terminal PDZ-binding motif DTHL); interaction is detected in glomerular epithelium cells. Binds PODXL. Interacts with SGK1 and KCNJ1/ROMK1. Interacts (via the PDZ domains) with SLC26A6. As to expression, detected in kidney glomeruli.

The protein resides in the endomembrane system. Its subcellular location is the nucleus. It localises to the apical cell membrane. Its function is as follows. Scaffold protein that connects plasma membrane proteins with members of the ezrin/moesin/radixin family and thereby helps to link them to the actin cytoskeleton and to regulate their surface expression. Necessary for cAMP-mediated phosphorylation and inhibition of SLC9A3. May also act as scaffold protein in the nucleus. This is Na(+)/H(+) exchange regulatory cofactor NHE-RF2 (NHERF2) from Oryctolagus cuniculus (Rabbit).